The chain runs to 132 residues: Small ribosomal subunit protein uS8 (132 aa).

The protein belongs to the universal ribosomal protein uS8 family. Part of the 30S ribosomal subunit. Contacts proteins S5 and S12.

Functionally, one of the primary rRNA binding proteins, it binds directly to 16S rRNA central domain where it helps coordinate assembly of the platform of the 30S subunit. This Francisella tularensis subsp. holarctica (strain FTNF002-00 / FTA) protein is Small ribosomal subunit protein uS8.